The primary structure comprises 335 residues: Ketol-acid reductoisomerase (NADP(+)) (335 aa).

A KARI N-terminal Rossmann domain is found at methionine 1 to threonine 182. Residues tyrosine 25 to glutamine 28, arginine 48, serine 51, serine 53, and aspartate 83 to glutamine 86 each bind NADP(+). The active site involves histidine 108. Glycine 134 contributes to the NADP(+) binding site. The KARI C-terminal knotted domain occupies threonine 183–leucine 328. Residues aspartate 191, glutamate 195, glutamate 227, and glutamate 231 each coordinate Mg(2+). Serine 252 contributes to the substrate binding site.

It belongs to the ketol-acid reductoisomerase family. The cofactor is Mg(2+).

The enzyme catalyses (2R)-2,3-dihydroxy-3-methylbutanoate + NADP(+) = (2S)-2-acetolactate + NADPH + H(+). It carries out the reaction (2R,3R)-2,3-dihydroxy-3-methylpentanoate + NADP(+) = (S)-2-ethyl-2-hydroxy-3-oxobutanoate + NADPH + H(+). It participates in amino-acid biosynthesis; L-isoleucine biosynthesis; L-isoleucine from 2-oxobutanoate: step 2/4. It functions in the pathway amino-acid biosynthesis; L-valine biosynthesis; L-valine from pyruvate: step 2/4. Its function is as follows. Involved in the biosynthesis of branched-chain amino acids (BCAA). Catalyzes an alkyl-migration followed by a ketol-acid reduction of (S)-2-acetolactate (S2AL) to yield (R)-2,3-dihydroxy-isovalerate. In the isomerase reaction, S2AL is rearranged via a Mg-dependent methyl migration to produce 3-hydroxy-3-methyl-2-ketobutyrate (HMKB). In the reductase reaction, this 2-ketoacid undergoes a metal-dependent reduction by NADPH to yield (R)-2,3-dihydroxy-isovalerate. The polypeptide is Ketol-acid reductoisomerase (NADP(+)) (Methanosarcina mazei (strain ATCC BAA-159 / DSM 3647 / Goe1 / Go1 / JCM 11833 / OCM 88) (Methanosarcina frisia)).